The chain runs to 521 residues: MTQDKILILDFGSQVTQLIARRVREAHVYCELHSFDMPLDEIKAFNPKGIILSGGPNSVYESDYQADTGIFDLGIPILGICYGMQFMAHHLGGEVQPGNQREFGYAQVKTIDSELTRGIQDDTPNTLDVWMSHGDKVSKLPTGFTVIGDTPSCPIAMMENAEKQFYGIQFHPEVTHTKQGRALLNRFVLDICGAQPSWTMPNYIEEAVAKIREQVGSDEVILGLSGGVDSSVAAALIHRAIGDQLTCVFVDHGLLRLNEGKMVMDMFARNLGVKVIHVDAEGQFMEKLAGVTDPEKKRKIIGAEFIEVFDAEEKKLTNAKWLAQGTIYPDVIESAGAKTKKAHAIKSHHNVGGLPENMKLKLLEPLRDLFKDEVRELGVALGLPREMVYRHPFPGPGLGVRILGEVKKEYADLLRQADDIFIQELRNTTDENGTSWYDLTSQAFAVFLPVKSVGVMGDGRTYDYVVALRAVITSDFMTAHWAELPYSLLGRVSNRIINEVKGINRVVYDVSGKPPATIEWE.

Residues 5–197 (KILILDFGSQ…VLDICGAQPS (193 aa)) form the Glutamine amidotransferase type-1 domain. C81 serves as the catalytic Nucleophile. Active-site residues include H171 and E173. The GMPS ATP-PPase domain occupies 198-390 (WTMPNYIEEA…LGLPREMVYR (193 aa)). 225–231 (SGGVDSS) lines the ATP pocket.

In terms of assembly, homodimer.

The catalysed reaction is XMP + L-glutamine + ATP + H2O = GMP + L-glutamate + AMP + diphosphate + 2 H(+). It functions in the pathway purine metabolism; GMP biosynthesis; GMP from XMP (L-Gln route): step 1/1. Its function is as follows. Catalyzes the synthesis of GMP from XMP. The polypeptide is GMP synthase [glutamine-hydrolyzing] (Neisseria meningitidis serogroup C / serotype 2a (strain ATCC 700532 / DSM 15464 / FAM18)).